The primary structure comprises 201 residues: Small ribosomal subunit protein uS4B (201 aa).

One can recognise an S4 RNA-binding domain in the interval 93-156 (QRLDTVVYRL…RSLAVVRESL (64 aa)).

It belongs to the universal ribosomal protein uS4 family. In terms of assembly, part of the 30S ribosomal subunit. Contacts protein S5. The interaction surface between S4 and S5 is involved in control of translational fidelity.

In terms of biological role, one of the primary rRNA binding proteins, it binds directly to 16S rRNA where it nucleates assembly of the body of the 30S subunit. With S5 and S12 plays an important role in translational accuracy. The sequence is that of Small ribosomal subunit protein uS4B from Symbiobacterium thermophilum (strain DSM 24528 / JCM 14929 / IAM 14863 / T).